Consider the following 384-residue polypeptide: S-adenosylmethionine synthase (384 aa).

Position 15 (His-15) interacts with ATP. Asp-17 is a binding site for Mg(2+). Glu-43 lines the K(+) pocket. L-methionine-binding residues include Glu-56 and Gln-99. Positions 99 to 109 (QSPDINQGVDR) are flexible loop. Residues 164 to 166 (DAK), 230 to 231 (RF), Asp-239, 245 to 246 (RK), Ala-262, and Lys-266 contribute to the ATP site. Residue Asp-239 participates in L-methionine binding. Lys-270 serves as a coordination point for L-methionine.

The protein belongs to the AdoMet synthase family. In terms of assembly, homotetramer; dimer of dimers. Requires Mg(2+) as cofactor. The cofactor is K(+).

It localises to the cytoplasm. It carries out the reaction L-methionine + ATP + H2O = S-adenosyl-L-methionine + phosphate + diphosphate. It participates in amino-acid biosynthesis; S-adenosyl-L-methionine biosynthesis; S-adenosyl-L-methionine from L-methionine: step 1/1. Its function is as follows. Catalyzes the formation of S-adenosylmethionine (AdoMet) from methionine and ATP. The overall synthetic reaction is composed of two sequential steps, AdoMet formation and the subsequent tripolyphosphate hydrolysis which occurs prior to release of AdoMet from the enzyme. The chain is S-adenosylmethionine synthase from Escherichia coli (strain K12 / DH10B).